Consider the following 199-residue polypeptide: 3-isopropylmalate dehydratase small subunit (199 aa).

It belongs to the LeuD family. LeuD type 1 subfamily. As to quaternary structure, heterodimer of LeuC and LeuD.

The enzyme catalyses (2R,3S)-3-isopropylmalate = (2S)-2-isopropylmalate. It participates in amino-acid biosynthesis; L-leucine biosynthesis; L-leucine from 3-methyl-2-oxobutanoate: step 2/4. Its function is as follows. Catalyzes the isomerization between 2-isopropylmalate and 3-isopropylmalate, via the formation of 2-isopropylmaleate. The protein is 3-isopropylmalate dehydratase small subunit of Bacillus velezensis (strain DSM 23117 / BGSC 10A6 / LMG 26770 / FZB42) (Bacillus amyloliquefaciens subsp. plantarum).